Reading from the N-terminus, the 339-residue chain is 3-isopropylmalate dehydrogenase (339 aa).

4 residues coordinate substrate: R88, R98, R122, and D212. Mg(2+)-binding residues include D212, D236, and D240. 272–284 lines the NAD(+) pocket; that stretch reads GSAPDIAGKGIAD.

Belongs to the isocitrate and isopropylmalate dehydrogenases family. LeuB type 2 subfamily. As to quaternary structure, homodimer. Mg(2+) is required as a cofactor. Mn(2+) serves as cofactor.

The protein resides in the cytoplasm. It carries out the reaction (2R,3S)-3-isopropylmalate + NAD(+) = 4-methyl-2-oxopentanoate + CO2 + NADH. It participates in amino-acid biosynthesis; L-leucine biosynthesis; L-leucine from 3-methyl-2-oxobutanoate: step 3/4. In terms of biological role, catalyzes the oxidation of 3-carboxy-2-hydroxy-4-methylpentanoate (3-isopropylmalate) to 3-carboxy-4-methyl-2-oxopentanoate. The product decarboxylates to 4-methyl-2 oxopentanoate. The chain is 3-isopropylmalate dehydrogenase from Corynebacterium aurimucosum (strain ATCC 700975 / DSM 44827 / CIP 107346 / CN-1) (Corynebacterium nigricans).